We begin with the raw amino-acid sequence, 200 residues long: Dephospho-CoA kinase (200 aa).

The 197-residue stretch at 4-200 folds into the DPCK domain; sequence VIGLTGGIGS…QKYIKMSHLY (197 aa). 12 to 17 contacts ATP; that stretch reads GSGKTT.

This sequence belongs to the CoaE family.

It localises to the cytoplasm. The enzyme catalyses 3'-dephospho-CoA + ATP = ADP + CoA + H(+). It functions in the pathway cofactor biosynthesis; coenzyme A biosynthesis; CoA from (R)-pantothenate: step 5/5. Catalyzes the phosphorylation of the 3'-hydroxyl group of dephosphocoenzyme A to form coenzyme A. The sequence is that of Dephospho-CoA kinase from Photobacterium profundum (strain SS9).